Reading from the N-terminus, the 233-residue chain is Large ribosomal subunit protein uL1 (233 aa).

The protein belongs to the universal ribosomal protein uL1 family. Part of the 50S ribosomal subunit.

Functionally, binds directly to 23S rRNA. The L1 stalk is quite mobile in the ribosome, and is involved in E site tRNA release. Protein L1 is also a translational repressor protein, it controls the translation of the L11 operon by binding to its mRNA. In Psychrobacter sp. (strain PRwf-1), this protein is Large ribosomal subunit protein uL1.